Reading from the N-terminus, the 293-residue chain is DOMON domain-containing protein FRRS1L (293 aa).

A signal peptide spans 1-28 (MARPPRQHPGVWASLLLLLLTGPAACAA). The disordered stretch occupies residues 29–61 (SPADDGAGPGGRGPRGRARGDTGADEAVPRHDS). The segment covering 46–61 (ARGDTGADEAVPRHDS) has biased composition (basic and acidic residues). Positions 119–234 (CDYFLSYRMI…WYYLFAWGPA (116 aa)) constitute a DOMON domain. Residues 271-291 (TFSSPFCLLLIVALTFYLLMG) traverse the membrane as a helical segment.

In terms of assembly, component of the outer core of AMPAR complex. AMPAR complex consists of an inner core made of 4 pore-forming GluA/GRIA proteins (GRIA1, GRIA2, GRIA3 and GRIA4) and 4 major auxiliary subunits arranged in a twofold symmetry. One of the two pairs of distinct binding sites is occupied either by CNIH2, CNIH3 or CACNG2, CACNG3. The other harbors CACNG2, CACNG3, CACNG4, CACNG8 or GSG1L. This inner core of AMPAR complex is complemented by outer core constituents binding directly to the GluA/GRIA proteins at sites distinct from the interaction sites of the inner core constituents. Outer core constituents include at least PRRT1, PRRT2, CKAMP44/SHISA9, FRRS1L and NRN1. The proteins of the inner and outer core serve as a platform for other, more peripherally associated AMPAR constituents. Alone or in combination, these auxiliary subunits control the gating and pharmacology of the AMPAR complex and profoundly impact their biogenesis and protein processing. Expressed in adult and fetal brain. Very weak expression in medulla, spinal cord and in adult ovary.

Its subcellular location is the cell membrane. The protein localises to the synapse. In terms of biological role, important modulator of glutamate signaling pathway. The chain is DOMON domain-containing protein FRRS1L (FRRS1L) from Homo sapiens (Human).